The following is a 589-amino-acid chain: Mediator of RNA polymerase II transcription subunit 26 (589 aa).

The region spanning 10 to 87 is the TFIIS N-terminal domain; sequence QMRDRLLQAI…RNWQKLIEPG (78 aa). 3 disordered regions span residues 83-233, 247-320, and 363-441; these read LIEP…TKLP, ARVD…DGPS, and LETK…PIPE. The span at 190–213 shows a compositional bias: basic and acidic residues; the sequence is LLEKDDEVPSDRIRLEHLDNDRHN. Low complexity predominate over residues 259 to 268; that stretch reads SPRYSSSPRS. The segment covering 276–297 has biased composition (polar residues); the sequence is KRSTTYAPKGTLSSPSLNSAQV. Composition is skewed to basic and acidic residues over residues 398–412 and 424–435; these read SEDR…RRLT and TPKESHQEEECH.

It belongs to the Mediator complex subunit 26 family. In terms of assembly, component of the Mediator complex.

It is found in the nucleus. In terms of biological role, component of the Mediator complex, a coactivator involved in the regulated transcription of nearly all RNA polymerase II-dependent genes. Mediator functions as a bridge to convey information from gene-specific regulatory proteins to the basal RNA polymerase II transcription machinery. Mediator is recruited to promoters by direct interactions with regulatory proteins and serves as a scaffold for the assembly of a functional preinitiation complex with RNA polymerase II and the general transcription factors. The polypeptide is Mediator of RNA polymerase II transcription subunit 26 (med26) (Danio rerio (Zebrafish)).